We begin with the raw amino-acid sequence, 320 residues long: Fructose-1,6-bisphosphatase class 1 (320 aa).

Glutamate 84, aspartate 103, leucine 105, and aspartate 106 together coordinate Mg(2+). Residues aspartate 106 to serine 109, asparagine 196, and lysine 262 contribute to the substrate site. Glutamate 268 provides a ligand contact to Mg(2+).

This sequence belongs to the FBPase class 1 family. As to quaternary structure, homotetramer. It depends on Mg(2+) as a cofactor.

The protein resides in the cytoplasm. It catalyses the reaction beta-D-fructose 1,6-bisphosphate + H2O = beta-D-fructose 6-phosphate + phosphate. The protein operates within carbohydrate biosynthesis; gluconeogenesis. The polypeptide is Fructose-1,6-bisphosphatase class 1 (Shewanella amazonensis (strain ATCC BAA-1098 / SB2B)).